A 194-amino-acid chain; its full sequence is NADH-quinone oxidoreductase subunit B 1 (194 aa).

Polar residues predominate over residues 1–12 (MGVTPVSNQPLV). Residues 1–23 (MGVTPVSNQPLVAQQPKGIIDPS) are disordered. [4Fe-4S] cluster-binding residues include Cys-73, Cys-74, Cys-138, and Cys-168.

It belongs to the complex I 20 kDa subunit family. NDH-1 is composed of 14 different subunits. Subunits NuoB, C, D, E, F, and G constitute the peripheral sector of the complex. [4Fe-4S] cluster serves as cofactor.

It is found in the cell inner membrane. It carries out the reaction a quinone + NADH + 5 H(+)(in) = a quinol + NAD(+) + 4 H(+)(out). Functionally, NDH-1 shuttles electrons from NADH, via FMN and iron-sulfur (Fe-S) centers, to quinones in the respiratory chain. The immediate electron acceptor for the enzyme in this species is believed to be ubiquinone. Couples the redox reaction to proton translocation (for every two electrons transferred, four hydrogen ions are translocated across the cytoplasmic membrane), and thus conserves the redox energy in a proton gradient. The polypeptide is NADH-quinone oxidoreductase subunit B 1 (Rhizobium etli (strain ATCC 51251 / DSM 11541 / JCM 21823 / NBRC 15573 / CFN 42)).